The following is a 114-amino-acid chain: Histone H2A.Z-specific chaperone chz-1 (114 aa).

Polar residues predominate over residues 1–22 (MSTENGTTDTTLAGTAEANTPF). A disordered region spans residues 1–114 (MSTENGTTDT…FVPEDEEMEE (114 aa)). The segment covering 24 to 40 (SKGKGKAAAESEDHPMG) has biased composition (basic and acidic residues). Acidic residues-rich tracts occupy residues 41 to 68 (EAED…EEID) and 93 to 114 (PAEE…EMEE).

Belongs to the CHZ1 family. As to quaternary structure, forms a heterotrimer with H2A.Z-H2B, stabilizing the association of the histone dimer. Also, with a lower affinity, forms a heterotrimer with H2A-H2B.

Its subcellular location is the nucleus. In terms of biological role, forms a chaperone-bound H2A.Z-H2B complex that acts as a source for SWR1 complex-dependent H2A to H2A.Z histone replacement in chromatin. This chain is Histone H2A.Z-specific chaperone chz-1 (chz-1), found in Neurospora crassa (strain ATCC 24698 / 74-OR23-1A / CBS 708.71 / DSM 1257 / FGSC 987).